We begin with the raw amino-acid sequence, 3391 residues long: Genome polyprotein (3391 aa).

The interaction with host EXOC1 stretch occupies residues 1–15 (MNDQRKKAKNTPFNM). Residues 1–101 (MNDQRKKAKN…LNILNRRRRS (101 aa)) are Cytoplasmic-facing. Residues 37 to 72 (MLQGRGPLKLYMALVAFLRFLTIPPTAGILKRWGTI) form a hydrophobic; homodimerization of capsid protein C region. Residues 101–114 (SAGMIIMLIPTVMA) constitute a propeptide, ER anchor for the capsid protein C, removed in mature form by serine protease NS3. Residues 102-119 (AGMIIMLIPTVMAFHLTT) form a helical membrane-spanning segment. The Extracellular portion of the chain corresponds to 120–242 (RNGEPHMIVS…HVQRIETWIL (123 aa)). Asn-183 is a glycosylation site (N-linked (GlcNAc...) asparagine; by host). A helical transmembrane segment spans residues 243–260 (RHPGFTMMAAILAYTIGT). A topological domain (cytoplasmic) is located at residue Thr-261. Residues 262–280 (HFQRALIFILLTAVTPSMT) form a helical membrane-spanning segment. Residues 281–725 (MRCIGMSNRD…LHQVFGAIYG (445 aa)) are Extracellular-facing. 4 cysteine pairs are disulfide-bonded: Cys-283-Cys-310, Cys-340-Cys-401, Cys-354-Cys-385, and Cys-372-Cys-396. N-linked (GlcNAc...) asparagine; by host glycosylation is present at Asn-347. Residues 378–391 (DRGWGNGCGLFGKG) are fusion peptide. N-linked (GlcNAc...) asparagine; by host glycosylation occurs at Asn-433. 2 disulfides stabilise this stretch: Cys-465–Cys-565 and Cys-582–Cys-613. Residues 726–746 (AAFSGVSWTMKILIGVIITWI) traverse the membrane as a helical segment. The Cytoplasmic portion of the chain corresponds to 747 to 752 (GMNSRS). Residues 753–773 (TSLSVTLVLVGIVTLYLGVMV) traverse the membrane as a helical segment. The Extracellular segment spans residues 774–1195 (QADSGCVVSW…MVGATMTDDI (422 aa)). Cystine bridges form between Cys-779–Cys-790, Cys-830–Cys-918, Cys-954–Cys-998, Cys-1055–Cys-1104, Cys-1066–Cys-1088, and Cys-1087–Cys-1091. 2 N-linked (GlcNAc...) asparagine; by host glycosylation sites follow: Asn-905 and Asn-982. Asn-1134 and Asn-1174 each carry an N-linked (GlcNAc...) asparagine; by host glycan. Residues 1196-1220 (GMGVTYLALLAAFKVRPTFAAGLLL) form a helical membrane-spanning segment. Topologically, residues 1221–1226 (RKLTSK) are cytoplasmic. A helical transmembrane segment spans residues 1227–1245 (ALMMTTIGIVLSSQSTTPE). The Lumenal portion of the chain corresponds to 1246-1269 (TILELTDALALGMMVLKMVRNMEK). The helical transmembrane segment at 1270–1290 (YQLAVTIMAILCVPNAVILQN) threads the bilayer. Position 1291 (Ala-1291) is a topological domain, cytoplasmic. Residues 1292–1310 (WKVSCTILAVVSVSPLFLT) traverse the membrane as a helical segment. Residues 1311-1317 (SSQQKTD) are Lumenal-facing. A helical membrane pass occupies residues 1318–1338 (WIPLALTIKGLNPTAIFLTTL). Over 1339–1346 (SRTSKKRS) the chain is Cytoplasmic. The helical transmembrane segment at 1347–1367 (WPLNEAIMAVGMVSILASSLL) threads the bilayer. At 1368–1370 (KND) the chain is on the lumenal side. Residues 1371 to 1391 (IPMTGPLVAGGPLTVCYVLTG) traverse the membrane as a helical segment. Residues 1392–1447 (RSADLELERAADVKWEDQAEISGSSPILSITISEDGSMSIKNEEEEQTLTILIRTG) are Cytoplasmic-facing. The segment at 1398–1437 (LERAADVKWEDQAEISGSSPILSITISEDGSMSIKNEEEE) is interacts with and activates NS3 protease. Positions 1448 to 1468 (LLVISGLFPVSIPITAAAWYL) form an intramembrane region, helical. Over 1469-2147 (WEVKKQRAGV…LSELPETLET (679 aa)) the chain is Cytoplasmic. Residues 1476–1653 (AGVLWDVPSP…EKSIEDNPEI (178 aa)) enclose the Peptidase S7 domain. Catalysis depends on charge relay system; for serine protease NS3 activity residues His-1526, Asp-1550, and Ser-1610. The 157-residue stretch at 1655 to 1811 (DDIFRKRRLT…QSNAPIIDEE (157 aa)) folds into the Helicase ATP-binding domain. An important for RNA-binding region spans residues 1659–1662 (RKRR). 1668 to 1675 (LHPGAGKT) serves as a coordination point for ATP. The DEAH box signature appears at 1759–1762 (DEAH). A Helicase C-terminal domain is found at 1821 to 1988 (SGHEWVTDFK…IIPSMFEPER (168 aa)). Lys-1863 carries the post-translational modification N6-acetyllysine; by host. The chain crosses the membrane as a helical span at residues 2148–2168 (LLLLTLLATVTGGILLFLMSG). Residues 2169-2170 (RG) lie on the Lumenal side of the membrane. Residues 2171 to 2191 (IGKMTLGMCCIITASILLWYA) constitute an intramembrane region (helical). Residue Gln-2192 is a topological domain, lumenal. Residues 2193–2213 (IQPHWIAASIILEFFLIVLLI) traverse the membrane as a helical segment. Topologically, residues 2214–2228 (PEPEKQRTPQDNQLT) are cytoplasmic. Residues 2229–2249 (YVVIAILTVVAATMANEMGFL) traverse the membrane as a helical segment. Residues 2250–2274 (EKTKKDLGLGSIATQQPESNILDID) are Lumenal-facing. Residues 2275–2295 (LRPASAWTLYAVATTFVTPML) constitute an intramembrane region (helical). At 2296–2316 (RHSIENSSVNVSLTAIANQAT) the chain is on the lumenal side. Asn-2301 and Asn-2305 each carry an N-linked (GlcNAc...) asparagine; by host glycan. An intramembrane region (helical) is located at residues 2317–2337 (VLMGLGKGWPLSKMDIGVPLL). Residues 2338 to 2347 (AIGCYSQVNP) are Lumenal-facing. Residues 2348-2368 (TTLTAALFLLVAHYAIIGPAL) form a helical membrane-spanning segment. Residues 2369–2413 (QAKASREAQKRAAAGIMKNPTVDGITVIDLDPIPYDPKFEKQLGQ) are Cytoplasmic-facing. A helical transmembrane segment spans residues 2414–2434 (VMLLVLCVTQVLMMRTTWALC). Topologically, residues 2435–2459 (EVLTLATGPISTLWEGNPGRFWNTT) are lumenal. The N-linked (GlcNAc...) asparagine; by host glycan is linked to Asn-2457. The helical transmembrane segment at 2460 to 2480 (IAVSMANIFRGSYLAGAGLLF) threads the bilayer. The Cytoplasmic portion of the chain corresponds to 2481–3391 (SIMKNTTNAR…REEEEAGVLW (911 aa)). The mRNA cap 0-1 NS5-type MT domain occupies 2493 to 2755 (TGNIGETLGE…DVDLGSGTRN (263 aa)). Ser-2547 contacts S-adenosyl-L-methionine. The residue at position 2547 (Ser-2547) is a Phosphoserine. Lys-2552 acts as the For 2'-O-MTase activity in catalysis. The SUMO-interacting motif motif lies at 2568–2571 (VVDL). The S-adenosyl-L-methionine site is built by Gly-2577, Trp-2578, Thr-2595, Lys-2596, Asp-2622, and Val-2623. Asp-2637 functions as the For 2'-O-MTase activity in the catalytic mechanism. Ile-2638 contributes to the S-adenosyl-L-methionine binding site. Residues Lys-2672 and Glu-2708 each act as for 2'-O-MTase activity in the active site. Tyr-2710 contributes to the S-adenosyl-L-methionine binding site. Residues Glu-2929, His-2933, Cys-2938, and Cys-2941 each contribute to the Zn(2+) site. Positions 3020–3169 (AMYADDTAGW…PLDDRLPSAL (150 aa)) constitute a RdRp catalytic domain. Residues His-3203, Cys-3219, and Cys-3338 each coordinate Zn(2+).

The protein in the N-terminal section; belongs to the class I-like SAM-binding methyltransferase superfamily. mRNA cap 0-1 NS5-type methyltransferase family. Homodimer. Interacts (via N-terminus) with host EXOC1 (via C-terminus); this interaction results in EXOC1 degradation through the proteasome degradation pathway. In terms of assembly, forms heterodimers with envelope protein E in the endoplasmic reticulum and Golgi. As to quaternary structure, homodimer; in the endoplasmic reticulum and Golgi. Interacts with protein prM. Interacts with non-structural protein 1. Homodimer; Homohexamer when secreted. Interacts with envelope protein E. Interacts with host PRKAA1. In terms of assembly, interacts (via N-terminus) with serine protease NS3. As to quaternary structure, forms a heterodimer with serine protease NS3. May form homooligomers. Forms a heterodimer with NS2B. Interacts with NS4B. Interacts with unphosphorylated RNA-directed RNA polymerase NS5; this interaction stimulates RNA-directed RNA polymerase NS5 guanylyltransferase activity. Interacts with host SHFL. In terms of assembly, interacts with host MAVS; this interaction inhibits the synthesis of IFN-beta. Interacts with host SHFL. Interacts with host AUP1; the interaction occurs in the presence of Dengue virus NS4B and induces lipophagy which facilitates production of virus progeny particles. May interact with host SRPRA and SEC61G. As to quaternary structure, interacts with serine protease NS3. Homodimer. Interacts with host STAT2; this interaction inhibits the phosphorylation of the latter, and, when all viral proteins are present (polyprotein), targets STAT2 for degradation. Interacts with serine protease NS3. Interacts with host PAF1 complex; the interaction may prevent the recruitment of the PAF1 complex to interferon-responsive genes, and thus reduces the immune response. Specific enzymatic cleavages in vivo yield mature proteins. Cleavages in the lumen of endoplasmic reticulum are performed by host signal peptidase, whereas cleavages in the cytoplasmic side are performed by serine protease NS3. Signal cleavage at the 2K-4B site requires a prior NS3 protease-mediated cleavage at the 4A-2K site. Post-translationally, cleaved in post-Golgi vesicles by a host furin, releasing the mature small envelope protein M, and peptide pr. This cleavage is incomplete as up to 30% of viral particles still carry uncleaved prM. In terms of processing, N-glycosylated. N-glycosylated. The excreted form is glycosylated and this is required for efficient secretion of the protein from infected cells. Post-translationally, acetylated by host KAT5. Acetylation modulates NS3 RNA-binding and unwinding activities and plays an important positive role for viral replication. In terms of processing, sumoylation of RNA-directed RNA polymerase NS5 increases NS5 protein stability allowing proper viral RNA replication. Phosphorylated on serines residues. This phosphorylation may trigger NS5 nuclear localization.

It localises to the virion. The protein localises to the host nucleus. The protein resides in the host cytoplasm. It is found in the host perinuclear region. Its subcellular location is the secreted. It localises to the virion membrane. The protein localises to the host endoplasmic reticulum membrane. The protein resides in the host mitochondrion. The catalysed reaction is Selective hydrolysis of -Xaa-Xaa-|-Yaa- bonds in which each of the Xaa can be either Arg or Lys and Yaa can be either Ser or Ala.. It carries out the reaction RNA(n) + a ribonucleoside 5'-triphosphate = RNA(n+1) + diphosphate. It catalyses the reaction a ribonucleoside 5'-triphosphate + H2O = a ribonucleoside 5'-diphosphate + phosphate + H(+). The enzyme catalyses ATP + H2O = ADP + phosphate + H(+). The catalysed reaction is a 5'-end (5'-triphosphoguanosine)-ribonucleoside in mRNA + S-adenosyl-L-methionine = a 5'-end (N(7)-methyl 5'-triphosphoguanosine)-ribonucleoside in mRNA + S-adenosyl-L-homocysteine. It carries out the reaction a 5'-end (N(7)-methyl 5'-triphosphoguanosine)-ribonucleoside in mRNA + S-adenosyl-L-methionine = a 5'-end (N(7)-methyl 5'-triphosphoguanosine)-(2'-O-methyl-ribonucleoside) in mRNA + S-adenosyl-L-homocysteine + H(+). Its function is as follows. Plays a role in virus budding by binding to the cell membrane and gathering the viral RNA into a nucleocapsid that forms the core of a mature virus particle. During virus entry, may induce genome penetration into the host cytoplasm after hemifusion induced by the surface proteins. Can migrate to the cell nucleus where it modulates host functions. Overcomes the anti-viral effects of host EXOC1 by sequestering and degrading the latter through the proteasome degradation pathway. Functionally, inhibits RNA silencing by interfering with host Dicer. In terms of biological role, prevents premature fusion activity of envelope proteins in trans-Golgi by binding to envelope protein E at pH6.0. After virion release in extracellular space, gets dissociated from E dimers. Acts as a chaperone for envelope protein E during intracellular virion assembly by masking and inactivating envelope protein E fusion peptide. prM is the only viral peptide matured by host furin in the trans-Golgi network probably to avoid catastrophic activation of the viral fusion activity in acidic Golgi compartment prior to virion release. prM-E cleavage is inefficient, and many virions are only partially matured. These uncleaved prM would play a role in immune evasion. Its function is as follows. May play a role in virus budding. Exerts cytotoxic effects by activating a mitochondrial apoptotic pathway through M ectodomain. May display a viroporin activity. Functionally, binds to host cell surface receptor and mediates fusion between viral and cellular membranes. Envelope protein is synthesized in the endoplasmic reticulum in the form of heterodimer with protein prM. They play a role in virion budding in the ER, and the newly formed immature particle is covered with 60 spikes composed of heterodimer between precursor prM and envelope protein E. The virion is transported to the Golgi apparatus where the low pH causes dissociation of PrM-E heterodimers and formation of E homodimers. prM-E cleavage is inefficient, and many virions are only partially matured. These uncleaved prM would play a role in immune evasion. In terms of biological role, involved in immune evasion, pathogenesis and viral replication. Once cleaved off the polyprotein, is targeted to three destinations: the viral replication cycle, the plasma membrane and the extracellular compartment. Essential for viral replication. Required for formation of the replication complex and recruitment of other non-structural proteins to the ER-derived membrane structures. Excreted as a hexameric lipoparticle that plays a role against host immune response. Antagonizing the complement function. Binds to the host macrophages and dendritic cells. Inhibits signal transduction originating from Toll-like receptor 3 (TLR3). Involved in immune evasion, pathogenesis and viral replication. Once cleaved off the polyprotein, is targeted to three destinations: the viral replication cycle, the plasma membrane and the extracellular compartment. Essential for viral replication. Required for formation of the replication complex and recruitment of other non-structural proteins to the ER-derived membrane structures. Excreted as a hexameric lipoparticle that plays a role against host immune response. Antagonizing the complement function. Binds to the host macrophages and dendritic cells. Inhibits signal transduction originating from Toll-like receptor 3 (TLR3). Mediates complement activation, which may contribute to the pathogenesis of the vascular leakage that occurs in severe dengue disease. Activates autophagy through the AMPK/ERK/mTOR signaling pathway. Mechanistically, acts as the assembly platform for STK11-AMPK interactions and promotes STK11-AMPK interactions. In turn, promotes phosphorylation of the AMPK kinase structural domain and activates AMPK, thereby positively regulating the AMPK/ERK/mTOR signaling pathway and inducing autophagy. Its function is as follows. Component of the viral RNA replication complex that functions in virion assembly and antagonizes the host immune response. Functionally, required cofactor for the serine protease function of NS3. May have membrane-destabilizing activity and form viroporins. In terms of biological role, displays three enzymatic activities: serine protease, NTPase and RNA helicase. NS3 serine protease, in association with NS2B, performs its autocleavage and cleaves the polyprotein at dibasic sites in the cytoplasm: C-prM, NS2A-NS2B, NS2B-NS3, NS3-NS4A, NS4A-2K and NS4B-NS5. NS3 RNA helicase binds RNA and unwinds dsRNA in the 3' to 5' direction. Regulates the ATPase activity of the NS3 helicase activity. NS4A allows NS3 helicase to conserve energy during unwinding. Plays a role in the inhibition of the host innate immune response. Interacts with host MAVS and thereby prevents the interaction between RIGI and MAVS. In turn, IFN-beta production is impaired. Interacts with host AUP1 which mediates induction of lipophagy in host cells and facilitates production of virus progeny particles. Its function is as follows. Functions as a signal peptide for NS4B and is required for the interferon antagonism activity of the latter. Functionally, induces the formation of ER-derived membrane vesicles where the viral replication takes place. Inhibits interferon (IFN)-induced host STAT1 phosphorylation and nuclear translocation, thereby preventing the establishment of cellular antiviral state by blocking the IFN-alpha/beta pathway. In terms of biological role, replicates the viral (+) and (-) RNA genome, and performs the capping of genomes in the cytoplasm. NS5 methylates viral RNA cap at guanine N-7 and ribose 2'-O positions. Besides its role in RNA genome replication, also prevents the establishment of cellular antiviral state by blocking the interferon-alpha/beta (IFN-alpha/beta) signaling pathway. Inhibits host TYK2 and STAT2 phosphorylation, thereby preventing activation of JAK-STAT signaling pathway. May reduce immune responses by preventing the recruitment of the host PAF1 complex to interferon-responsive genes. The polypeptide is Genome polyprotein (Aedes aegypti (Yellowfever mosquito)).